The sequence spans 329 residues: GTPase Obg (329 aa).

The Obg domain maps to 1–159 (MQFIDEAKIF…MWVWLHLKLL (159 aa)). The OBG-type G domain occupies 160–327 (SDVGLVGLPN…LLANILSELQ (168 aa)). GTP contacts are provided by residues 166–173 (GLPNAGKS), 191–195 (FTTLT), 212–215 (DIPG), 279–282 (TKTD), and 308–310 (SSY). Mg(2+) is bound by residues serine 173 and threonine 193.

Belongs to the TRAFAC class OBG-HflX-like GTPase superfamily. OBG GTPase family. Monomer. Mg(2+) serves as cofactor.

The protein resides in the cytoplasm. Functionally, an essential GTPase which binds GTP, GDP and possibly (p)ppGpp with moderate affinity, with high nucleotide exchange rates and a fairly low GTP hydrolysis rate. Plays a role in control of the cell cycle, stress response, ribosome biogenesis and in those bacteria that undergo differentiation, in morphogenesis control. In Orientia tsutsugamushi (strain Ikeda) (Rickettsia tsutsugamushi), this protein is GTPase Obg.